The sequence spans 564 residues: Dihydropyrimidinase-related protein 5 (564 aa).

2 positions are modified to phosphothreonine: T509 and T514. 2 positions are modified to phosphoserine: S532 and S538. R559 carries the post-translational modification Omega-N-methylarginine.

Belongs to the metallo-dependent hydrolases superfamily. Hydantoinase/dihydropyrimidinase family. In terms of assembly, homotetramer, and heterotetramer with other DPYS-like proteins. Interacts with DPYSL2, DPYSL3 and DPYSL4. Interacts with MAP2 and TUBB3. Highly expressed in embryonic and early postnatal brain and spinal cord.

Its subcellular location is the cytoplasm. Functionally, involved in the negative regulation of dendrite outgrowth. This is Dihydropyrimidinase-related protein 5 (Dpysl5) from Rattus norvegicus (Rat).